The primary structure comprises 330 residues: Phytanoyl-CoA hydroxylase-interacting protein (330 aa).

A Fibronectin type-III domain is found at threonine 6–tyrosine 115. N-linked (GlcNAc...) asparagine glycosylation is found at asparagine 14 and asparagine 325.

This sequence belongs to the PHYHIP family. As to quaternary structure, interacts with PHYH and ADGRB1.

In terms of biological role, its interaction with PHYH suggests a role in the development of the central system. The protein is Phytanoyl-CoA hydroxylase-interacting protein (PHYHIP) of Bos taurus (Bovine).